The chain runs to 69 residues: U2-agatoxin-Ao1z (69 aa).

Positions 1-20 (MRAIISLLLISAMVFSMIEA) are cleaved as a signal peptide. Residues 21 to 34 (VPVEEGLQLFEGER) constitute a propeptide that is removed on maturation. 3 disulfide bridges follow: Cys37-Cys53, Cys44-Cys58, and Cys52-Cys68.

It belongs to the neurotoxin 01 (U2-agtx) family. Expressed by the venom gland.

The protein localises to the secreted. Functionally, insect active toxin causing rapid but reversible paralysis in crickets. No activity shown in mammals. Does not show effect on mammalian voltage-gated calcium channels. The polypeptide is U2-agatoxin-Ao1z (Agelena orientalis (Funnel-web spider)).